Consider the following 500-residue polypeptide: Cysteine--tRNA ligase (500 aa).

C30 is a binding site for Zn(2+). The 'HIGH' region motif lies at 32–42 (PTVYDYAHIGN). 3 residues coordinate Zn(2+): C224, H263, and E267. Positions 296 to 300 (KMSKS) match the 'KMSKS' region motif. K299 is a binding site for ATP.

Belongs to the class-I aminoacyl-tRNA synthetase family. In terms of assembly, monomer. The cofactor is Zn(2+).

It is found in the cytoplasm. The catalysed reaction is tRNA(Cys) + L-cysteine + ATP = L-cysteinyl-tRNA(Cys) + AMP + diphosphate. This is Cysteine--tRNA ligase from Bartonella bacilliformis (strain ATCC 35685 / KC583 / Herrer 020/F12,63).